The sequence spans 248 residues: PF03932 family protein CutC (248 aa).

The protein belongs to the CutC family. In terms of assembly, homodimer.

It is found in the cytoplasm. This Escherichia coli O17:K52:H18 (strain UMN026 / ExPEC) protein is PF03932 family protein CutC.